Here is a 503-residue protein sequence, read N- to C-terminus: Glycerol kinase (503 aa).

Position 17 (threonine 17) interacts with ADP. Residues threonine 17, threonine 18, and serine 19 each contribute to the ATP site. Threonine 17 is a binding site for sn-glycerol 3-phosphate. ADP is bound at residue arginine 21. Sn-glycerol 3-phosphate contacts are provided by arginine 87, glutamate 88, tyrosine 141, and aspartate 245. Glycerol contacts are provided by arginine 87, glutamate 88, tyrosine 141, aspartate 245, and glutamine 246. ADP-binding residues include threonine 267 and glycine 310. Residues threonine 267, glycine 310, glutamine 314, and glycine 411 each coordinate ATP. ADP contacts are provided by glycine 411 and asparagine 415.

Belongs to the FGGY kinase family.

It carries out the reaction glycerol + ATP = sn-glycerol 3-phosphate + ADP + H(+). The protein operates within polyol metabolism; glycerol degradation via glycerol kinase pathway; sn-glycerol 3-phosphate from glycerol: step 1/1. With respect to regulation, inhibited by fructose 1,6-bisphosphate (FBP). Functionally, key enzyme in the regulation of glycerol uptake and metabolism. Catalyzes the phosphorylation of glycerol to yield sn-glycerol 3-phosphate. This chain is Glycerol kinase, found in Pseudomonas tolaasii.